The sequence spans 187 residues: 2-oxoglutarate synthase subunit KorC (187 aa).

In terms of assembly, heterotetramer of the KorA, KorB, KorC and KorD subunits.

The enzyme catalyses 2 oxidized [2Fe-2S]-[ferredoxin] + 2-oxoglutarate + CoA = succinyl-CoA + 2 reduced [2Fe-2S]-[ferredoxin] + CO2 + H(+). The sequence is that of 2-oxoglutarate synthase subunit KorC (korC) from Archaeoglobus fulgidus (strain ATCC 49558 / DSM 4304 / JCM 9628 / NBRC 100126 / VC-16).